A 398-amino-acid polypeptide reads, in one-letter code: Phosphoglycerate kinase (398 aa).

Substrate contacts are provided by residues 21–23, Arg-36, 59–62, Arg-119, and Arg-157; these read DFN and HLGR. ATP is bound by residues Lys-208, Gly-296, Glu-327, and 354 to 357; that span reads GGDS.

It belongs to the phosphoglycerate kinase family. Monomer.

The protein localises to the cytoplasm. The catalysed reaction is (2R)-3-phosphoglycerate + ATP = (2R)-3-phospho-glyceroyl phosphate + ADP. Its pathway is carbohydrate degradation; glycolysis; pyruvate from D-glyceraldehyde 3-phosphate: step 2/5. The polypeptide is Phosphoglycerate kinase (Streptococcus agalactiae serotype III (strain NEM316)).